A 217-amino-acid polypeptide reads, in one-letter code: Small ribosomal subunit protein uS11m (217 aa).

A mitochondrion-targeting transit peptide spans 1–59 (MLLQPVWKGCRWTQFVRPIRRWNSTGTNRGVPFSFKDISNQEDITNISYPSSSDSVLTK).

This sequence belongs to the universal ribosomal protein uS11 family. In terms of assembly, component of the mitochondrial small ribosomal subunit (mt-SSU). Mature yeast 74S mitochondrial ribosomes consist of a small (37S) and a large (54S) subunit. The 37S small subunit contains a 15S ribosomal RNA (15S mt-rRNA) and 34 different proteins. The 54S large subunit contains a 21S rRNA (21S mt-rRNA) and 46 different proteins.

Its subcellular location is the mitochondrion. Component of the mitochondrial ribosome (mitoribosome), a dedicated translation machinery responsible for the synthesis of mitochondrial genome-encoded proteins, including at least some of the essential transmembrane subunits of the mitochondrial respiratory chain. The mitoribosomes are attached to the mitochondrial inner membrane and translation products are cotranslationally integrated into the membrane. This is Small ribosomal subunit protein uS11m (MRPS18) from Saccharomyces cerevisiae (strain ATCC 204508 / S288c) (Baker's yeast).